The sequence spans 413 residues: Type IV pilus assembly protein TapC (413 aa).

The next 4 membrane-spanning stretches (helical) occupy residues 180–200, 227–247, 286–306, and 386–406; these read YPAM…LFVI, FMQH…FLYV, LSTT…AAGA, and IMVV…LPIF.

This sequence belongs to the GSP F family.

It is found in the cell inner membrane. Involved in the translocation of the type IV pilin. This chain is Type IV pilus assembly protein TapC (tapC), found in Aeromonas hydrophila.